We begin with the raw amino-acid sequence, 573 residues long: DNA polymerase lambda (573 aa).

In terms of domain architecture, BRCT spans 35 to 131 (EARGWLSSLR…RLTDTEGFSL (97 aa)). Disordered stretches follow at residues 126-204 (TEGF…GPQV) and 214-233 (TGHY…APEA). Positions 263-277 (KAYSVQGDKWRALGY) are DNA-binding. The active-site Schiff-base intermediate with DNA is the lysine 310. The interval 343 to 346 (GTKT) is DNA-binding. DCTP-binding positions include arginine 384, 415–418 (SYRR), and 424–427 (GDVD). The involved in primer binding stretch occupies residues 418 to 427 (RGKMTCGDVD). Mn(2+) is bound by residues aspartate 425, aspartate 427, and aspartate 488. The segment at 464 to 503 (ENGQQQKYLGVCRLPGPGKRHRRLDIIVVPYCEFACALLY) is DNA-binding. Asparagine 511 lines the dCTP pocket.

Belongs to the DNA polymerase type-X family. In terms of assembly, interacts with PCNA. Interacts with PAXX; promoting POLL recruitment to double-strand breaks (DSBs) and stimulation of the end-filling activity of POLL. Interacts with XRCC4; promoting POLL recruitment to double-strand breaks (DSBs) and stimulation of the end-filling activity of POLL. Interacts with NHEJ1/XLF; promoting POLL recruitment to double-strand breaks (DSBs) and stimulation of the end-filling activity of POLL. It depends on Mn(2+) as a cofactor.

The protein localises to the nucleus. The enzyme catalyses DNA(n) + a 2'-deoxyribonucleoside 5'-triphosphate = DNA(n+1) + diphosphate. Its function is as follows. DNA polymerase that functions in several pathways of DNA repair. Involved in base excision repair (BER) responsible for repair of lesions that give rise to abasic (AP) sites in DNA. Also contributes to DNA double-strand break repair by non-homologous end joining and homologous recombination. Has both template-dependent and template-independent (terminal transferase) DNA polymerase activities. Also has a 5'-deoxyribose-5-phosphate lyase (dRP lyase) activity. In Mus musculus (Mouse), this protein is DNA polymerase lambda.